Reading from the N-terminus, the 612-residue chain is C4-dicarboxylate transport sensor protein DctB (612 aa).

A run of 2 helical transmembrane segments spans residues 23–43 (SLVI…YFAE) and 292–312 (VLLI…LLTL). A coiled-coil region spans residues 328–376 (KRQLEERVLERTRELENANAQLQQEVHEREQAQRELMRAQDEVVQAGKL). Residues 385 to 599 (SISHELNQPL…VVRLHLLPGV (215 aa)) form the Histidine kinase domain. His-388 bears the Phosphohistidine; by autocatalysis mark.

In terms of processing, autophosphorylated.

Its subcellular location is the cell inner membrane. It carries out the reaction ATP + protein L-histidine = ADP + protein N-phospho-L-histidine.. In terms of biological role, member of the two-component regulatory system DctB/DctD, which regulates C4-dicarboxylate transport via regulation of expression of the dctPQM operon and dctA. DctB functions as a membrane-associated protein kinase that phosphorylates DctD in response to environmental signals. The polypeptide is C4-dicarboxylate transport sensor protein DctB (Pseudomonas aeruginosa (strain ATCC 15692 / DSM 22644 / CIP 104116 / JCM 14847 / LMG 12228 / 1C / PRS 101 / PAO1)).